The chain runs to 244 residues: 14-3-3 protein beta/alpha-1 (244 aa).

Residue Met1 is modified to N-acetylmethionine.

Belongs to the 14-3-3 family. In terms of assembly, homodimer, and heterodimer with other family members. In terms of tissue distribution, expressed in brain, gill, heart, intestine, kidney, liver, ovary, skin, spleen and testis.

It is found in the cytoplasm. Functionally, adapter protein implicated in the regulation of a large spectrum of both general and specialized signaling pathways. Binds to a large number of partners, usually by recognition of a phosphoserine or phosphothreonine motif. Binding generally results in the modulation of the activity of the binding partner. In Oncorhynchus mykiss (Rainbow trout), this protein is 14-3-3 protein beta/alpha-1.